A 344-amino-acid polypeptide reads, in one-letter code: Eukaryotic translation initiation factor 2 subunit alpha homolog (344 aa).

The region spanning 21–92 (DMAVMIQVKN…EKGYIDLSKR (72 aa)) is the S1 motif domain. A Phosphoserine; by GCN2 modification is found at Ser56. The interval 312–344 (DNEEMSGDEDSGDEEEDTGMGEVDLDAGAGIIE) is disordered. Residues 314 to 336 (EEMSGDEDSGDEEEDTGMGEVDL) show a composition bias toward acidic residues.

Belongs to the eIF-2-alpha family. In terms of assembly, heterotrimer composed of an alpha, a beta and a gamma chain. Phosphorylated at Ser-56 by GCN2.

Its function is as follows. Functions in the early steps of protein synthesis by forming a ternary complex with GTP and initiator tRNA. This complex binds to a 40S ribosomal subunit, followed by mRNA binding to form a 43S pre-initiation complex. Junction of the 60S ribosomal subunit to form the 80S initiation complex is preceded by hydrolysis of the GTP bound to eIF-2 and release of an eIF-2-GDP binary complex. In order for eIF-2 to recycle and catalyze another round of initiation, the GDP bound to eIF-2 must exchange with GTP by way of a reaction catalyzed by eIF-2B. The polypeptide is Eukaryotic translation initiation factor 2 subunit alpha homolog (Arabidopsis thaliana (Mouse-ear cress)).